The chain runs to 481 residues: Ribulose bisphosphate carboxylase large chain (481 aa).

The propeptide occupies 1–2 (MS). At Pro-3 the chain carries N-acetylproline. Lys-14 carries the N6,N6,N6-trimethyllysine modification. Substrate is bound by residues Asn-123 and Thr-173. Lys-175 serves as the catalytic Proton acceptor. Residue Lys-177 participates in substrate binding. Mg(2+) contacts are provided by Lys-201, Asp-203, and Glu-204. Lys-201 carries the N6-carboxylysine modification. The Proton acceptor role is filled by His-294. Substrate contacts are provided by Arg-295, His-327, and Ser-379.

The protein belongs to the RuBisCO large chain family. Type I subfamily. In terms of assembly, heterohexadecamer of 8 large chains and 8 small chains; disulfide-linked. The disulfide link is formed within the large subunit homodimers. Mg(2+) is required as a cofactor. In terms of processing, the disulfide bond which can form in the large chain dimeric partners within the hexadecamer appears to be associated with oxidative stress and protein turnover.

It is found in the plastid. Its subcellular location is the chloroplast. The catalysed reaction is 2 (2R)-3-phosphoglycerate + 2 H(+) = D-ribulose 1,5-bisphosphate + CO2 + H2O. It catalyses the reaction D-ribulose 1,5-bisphosphate + O2 = 2-phosphoglycolate + (2R)-3-phosphoglycerate + 2 H(+). Functionally, ruBisCO catalyzes two reactions: the carboxylation of D-ribulose 1,5-bisphosphate, the primary event in carbon dioxide fixation, as well as the oxidative fragmentation of the pentose substrate in the photorespiration process. Both reactions occur simultaneously and in competition at the same active site. This Coffea arabica (Arabian coffee) protein is Ribulose bisphosphate carboxylase large chain.